The chain runs to 336 residues: NADH-quinone oxidoreductase subunit H (336 aa).

8 helical membrane-spanning segments follow: residues 17–37 (WFII…TYAI), 85–105 (ALFT…LAVM), 116–136 (LGIG…GVIT), 154–174 (AAQM…IVLL), 190–210 (VWNI…AQAE), 247–267 (VYMF…WLPI), 274–294 (IPGI…QFWI), and 309–329 (FAWK…AVVV).

The protein belongs to the complex I subunit 1 family. In terms of assembly, NDH-1 is composed of 14 different subunits. Subunits NuoA, H, J, K, L, M, N constitute the membrane sector of the complex.

The protein resides in the cell membrane. The enzyme catalyses a quinone + NADH + 5 H(+)(in) = a quinol + NAD(+) + 4 H(+)(out). NDH-1 shuttles electrons from NADH, via FMN and iron-sulfur (Fe-S) centers, to quinones in the respiratory chain. The immediate electron acceptor for the enzyme in this species is believed to be ubiquinone. Couples the redox reaction to proton translocation (for every two electrons transferred, four hydrogen ions are translocated across the cytoplasmic membrane), and thus conserves the redox energy in a proton gradient. This subunit may bind ubiquinone. This chain is NADH-quinone oxidoreductase subunit H, found in Brevibacillus brevis (strain 47 / JCM 6285 / NBRC 100599).